The chain runs to 132 residues: Small ribosomal subunit protein uS8 (132 aa).

Belongs to the universal ribosomal protein uS8 family. In terms of assembly, part of the 30S ribosomal subunit. Contacts proteins S5 and S12.

Functionally, one of the primary rRNA binding proteins, it binds directly to 16S rRNA central domain where it helps coordinate assembly of the platform of the 30S subunit. In Ehrlichia canis (strain Jake), this protein is Small ribosomal subunit protein uS8.